The primary structure comprises 448 residues: Asparagine--tRNA ligase (448 aa).

Belongs to the class-II aminoacyl-tRNA synthetase family. In terms of assembly, homodimer.

Its subcellular location is the cytoplasm. The enzyme catalyses tRNA(Asn) + L-asparagine + ATP = L-asparaginyl-tRNA(Asn) + AMP + diphosphate + H(+). The protein is Asparagine--tRNA ligase of Streptococcus thermophilus (strain ATCC BAA-491 / LMD-9).